Consider the following 184-residue polypeptide: Protein PPLZ12 (184 aa).

This Lupinus polyphyllus (Large-leaved lupine) protein is Protein PPLZ12 (PPLZ12).